The primary structure comprises 697 residues: Elongation factor G (697 aa).

Residues 6–281 (ENIRNIGICA…AVVDYLPSPI (276 aa)) form the tr-type G domain. Residues 15 to 22 (AHIDAGKT), 79 to 83 (DTPGH), and 133 to 136 (NKMD) contribute to the GTP site.

This sequence belongs to the TRAFAC class translation factor GTPase superfamily. Classic translation factor GTPase family. EF-G/EF-2 subfamily.

Its subcellular location is the cytoplasm. Catalyzes the GTP-dependent ribosomal translocation step during translation elongation. During this step, the ribosome changes from the pre-translocational (PRE) to the post-translocational (POST) state as the newly formed A-site-bound peptidyl-tRNA and P-site-bound deacylated tRNA move to the P and E sites, respectively. Catalyzes the coordinated movement of the two tRNA molecules, the mRNA and conformational changes in the ribosome. This chain is Elongation factor G, found in Rickettsia bellii (strain OSU 85-389).